The following is a 312-amino-acid chain: Transcription initiation factor IIB-2 (312 aa).

The TFIIB-type zinc finger occupies 2 to 34 (SDAFCSDCKRHTEVVFDHSAGDTVCSECGLVLE). Cysteine 6, cysteine 9, cysteine 26, and cysteine 29 together coordinate Zn(2+). Repeat copies occupy residues 115–192 (MADR…YIVK) and 216–290 (FCSN…DLYP).

The protein belongs to the TFIIB family. In terms of assembly, associates with TFIID-IIA (DA complex) to form TFIID-IIA-IIB (DAB-complex) which is then recognized by polymerase II.

The protein localises to the nucleus. Its function is as follows. General factor that plays a major role in the activation of eukaryotic genes transcribed by RNA polymerase II. This is Transcription initiation factor IIB-2 (TFIIB2) from Arabidopsis thaliana (Mouse-ear cress).